Here is an 82-residue protein sequence, read N- to C-terminus: Sulfur carrier protein TusA (82 aa).

Cys-19 serves as the catalytic Cysteine persulfide intermediate.

Belongs to the sulfur carrier protein TusA family.

Its subcellular location is the cytoplasm. Sulfur carrier protein which probably makes part of a sulfur-relay system. The protein is Sulfur carrier protein TusA of Photobacterium profundum (strain SS9).